Consider the following 572-residue polypeptide: AAA ATPase forming ring-shaped complexes (572 aa).

The disordered stretch occupies residues 1–22 (MTEPRHESGSAAPQRPATDPVQ). Positions 21–67 (VQRQVNLLRDQKRNLDKQAAALASQNEKLVRLLNASRQEIVGLKKTL) form a coiled coil. Residue 270–275 (GNGKTL) coordinates ATP. The span at 527 to 539 (HEQQDLPDTEDSE) shows a compositional bias: acidic residues. Residues 527–572 (HEQQDLPDTEDSEDWARLTGRRGDTIDSVHMASHRPQGEPGPGATP) are disordered.

This sequence belongs to the AAA ATPase family. As to quaternary structure, homohexamer. Assembles into a hexameric ring structure.

The sequence is that of AAA ATPase forming ring-shaped complexes from Kocuria rhizophila (strain ATCC 9341 / DSM 348 / NBRC 103217 / DC2201).